A 1774-amino-acid polypeptide reads, in one-letter code: 6-methylsalicylic acid synthase (1774 aa).

Residues Met1–Thr14 are compositionally biased toward polar residues. Residues Met1–Thr21 are disordered. One can recognise a Ketosynthase family 3 (KS3) domain in the interval Ser32–Glu457. Positions Arg186 to Gly238 are acyltransferase. Catalysis depends on for beta-ketoacyl synthase activity residues Cys204, His339, and His379. The segment at Asn642–Thr676 is acetyl/malonyl transferases. The active-site For malonyltransferase activity is the Ser653. An N-terminal hotdog fold region spans residues His926–Ser1045. Residues His926 to Val1202 enclose the PKS/mFAS DH domain. His958 functions as the Proton acceptor; for dehydratase activity in the catalytic mechanism. Positions Val1059–Val1202 are C-terminal hotdog fold. Asp1123 (proton donor; for dehydratase activity) is an active-site residue. Positions Gly1403–Arg1450 are 2-oxoacyl reductase. Gly1419–Gly1424 provides a ligand contact to NADP(+). One can recognise a Carrier domain in the interval Ala1698–Leu1772. Ser1732 carries the O-(pantetheine 4'-phosphoryl)serine modification.

Homomultimer.

It carries out the reaction 3 malonyl-CoA + acetyl-CoA + NADPH + 3 H(+) = 6-methylsalicylate + 3 CO2 + NADP(+) + 4 CoA + H2O. Its pathway is mycotoxin biosynthesis; patulin biosynthesis. Functionally, this multifunctional enzyme is a polyketide synthase. It catalyzes a total of 11 steps by seven different component enzymes, in the biosynthesis of the antibiotic patulin. The polypeptide is 6-methylsalicylic acid synthase (Penicillium patulum (Penicillium griseofulvum)).